The sequence spans 357 residues: GPI mannosyltransferase 2 (357 aa).

8 helical membrane passes run threonine 6 to proline 26, alanine 86 to leucine 106, isoleucine 128 to leucine 148, valine 167 to phenylalanine 187, glycine 201 to leucine 221, tyrosine 257 to tyrosine 277, leucine 286 to valine 306, and tyrosine 334 to leucine 354.

It belongs to the PIGV family.

It is found in the endoplasmic reticulum membrane. Its pathway is glycolipid biosynthesis; glycosylphosphatidylinositol-anchor biosynthesis. In terms of biological role, mannosyltransferase involved in glycosylphosphatidylinositol-anchor biosynthesis. Transfers the second mannose to the glycosylphosphatidylinositol during GPI precursor assembly. The polypeptide is GPI mannosyltransferase 2 (GPI18) (Yarrowia lipolytica (strain CLIB 122 / E 150) (Yeast)).